The chain runs to 251 residues: Imidazole glycerol phosphate synthase subunit HisF (251 aa).

Active-site residues include Asp11 and Asp130.

This sequence belongs to the HisA/HisF family. Heterodimer of HisH and HisF.

It localises to the cytoplasm. The enzyme catalyses 5-[(5-phospho-1-deoxy-D-ribulos-1-ylimino)methylamino]-1-(5-phospho-beta-D-ribosyl)imidazole-4-carboxamide + L-glutamine = D-erythro-1-(imidazol-4-yl)glycerol 3-phosphate + 5-amino-1-(5-phospho-beta-D-ribosyl)imidazole-4-carboxamide + L-glutamate + H(+). It functions in the pathway amino-acid biosynthesis; L-histidine biosynthesis; L-histidine from 5-phospho-alpha-D-ribose 1-diphosphate: step 5/9. IGPS catalyzes the conversion of PRFAR and glutamine to IGP, AICAR and glutamate. The HisF subunit catalyzes the cyclization activity that produces IGP and AICAR from PRFAR using the ammonia provided by the HisH subunit. The protein is Imidazole glycerol phosphate synthase subunit HisF of Phocaeicola vulgatus (strain ATCC 8482 / DSM 1447 / JCM 5826 / CCUG 4940 / NBRC 14291 / NCTC 11154) (Bacteroides vulgatus).